Reading from the N-terminus, the 323-residue chain is Protein prune homolog 2 (323 aa).

Disordered stretches follow at residues 1–67 and 79–110; these read MDIP…EIDI and DSFE…AEEE. A compositionally biased stretch (polar residues) spans 40-52; the sequence is PNINLSLDQSEGS. Residues 57–67 show a composition bias toward acidic residues; that stretch reads DNLDSPDEIDI. The 162-residue stretch at 130–291 folds into the CRAL-TRIO domain; that stretch reads DMKVIEPYRR…SIIKLDEELR (162 aa).

Its subcellular location is the cytoplasm. May play an important role in regulating differentiation, survival and aggressiveness of the tumor cells. In Pongo abelii (Sumatran orangutan), this protein is Protein prune homolog 2 (PRUNE2).